The primary structure comprises 134 residues: Profilin-1 (134 aa).

Cysteine 13 and cysteine 118 are joined by a disulfide. The short motif at 84–100 is the Involved in PIP2 interaction element; it reads AVIRGKKGSGGITIKKT. Threonine 114 is subject to Phosphothreonine.

It belongs to the profilin family. Occurs in many kinds of cells as a complex with monomeric actin in a 1:1 ratio. Post-translationally, phosphorylated by MAP kinases.

It localises to the cytoplasm. Its subcellular location is the cytoskeleton. Functionally, binds to actin and affects the structure of the cytoskeleton. At high concentrations, profilin prevents the polymerization of actin, whereas it enhances it at low concentrations. By binding to PIP2, it inhibits the formation of IP3 and DG. The chain is Profilin-1 (PRO1) from Olea europaea (Common olive).